A 131-amino-acid chain; its full sequence is Chromatin accessibility complex protein 1 (131 aa).

Ala2 carries the N-acetylalanine modification. A coiled-coil region spans residues 100–124 (ASKYLKMLKEEKREEDEENDNDNES). At Lys102 the chain carries N6-acetyllysine. Residues 109–131 (EEKREEDEENDNDNESDHDEADS) form a disordered region. A compositionally biased stretch (acidic residues) spans 112 to 131 (REEDEENDNDNESDHDEADS). The residue at position 124 (Ser124) is a Phosphoserine.

Heterodimer with POLE3; binds to DNA. Component of the CHRAC ISWI chromatin remodeling complex at least composed of SMARCA5/SNF2H, BAZ1A/ACF1, CHRAC1 and POLE3; the complex preferentially binds DNA through the CHRAC1-POLE3 heterodimer and possesses ATP-dependent nucleosome-remodeling activity. Within the complex, the heterodimer with POLE3 interacts with SMARCA5/SNF2H; the interaction is direct and enhances nucleosome sliding activity by the SMARCA5/SNF2H and BAZ1A/ACF1 interaction. Within the complex, the heterodimer with POLE3 interacts with BAZ1A/ACF1; the interactions are direct. In terms of tissue distribution, expressed in heart, brain, placenta, lung, liver, skeletal muscle, kidney and pancreas.

It is found in the nucleus. Forms a complex with DNA polymerase epsilon subunit POLE3 and binds naked DNA, which is then incorporated into chromatin, aided by the nucleosome remodeling activity of ISWI/SNF2H and ACF1. Does not enhance nucleosome sliding activity of the ACF-5 ISWI chromatin remodeling complex. The chain is Chromatin accessibility complex protein 1 (CHRAC1) from Homo sapiens (Human).